Consider the following 423-residue polypeptide: UDP-N-acetylmuramoylalanine--D-glutamate ligase (423 aa).

112–118 serves as a coordination point for ATP; the sequence is GSVGKST.

This sequence belongs to the MurCDEF family.

The protein localises to the cytoplasm. The enzyme catalyses UDP-N-acetyl-alpha-D-muramoyl-L-alanine + D-glutamate + ATP = UDP-N-acetyl-alpha-D-muramoyl-L-alanyl-D-glutamate + ADP + phosphate + H(+). The protein operates within cell wall biogenesis; peptidoglycan biosynthesis. In terms of biological role, cell wall formation. Catalyzes the addition of glutamate to the nucleotide precursor UDP-N-acetylmuramoyl-L-alanine (UMA). This is UDP-N-acetylmuramoylalanine--D-glutamate ligase from Thermosipho africanus (strain TCF52B).